Here is a 336-residue protein sequence, read N- to C-terminus: D-erythrose-4-phosphate dehydrogenase (336 aa).

NAD(+)-binding positions include 11–12 (RI) and arginine 80. Residues 153 to 155 (SCT), arginine 199, 212 to 213 (TK), and arginine 235 contribute to the substrate site. The active-site Nucleophile is cysteine 154. Asparagine 317 contacts NAD(+).

Belongs to the glyceraldehyde-3-phosphate dehydrogenase family. Epd subfamily. As to quaternary structure, homotetramer.

It localises to the cytoplasm. The catalysed reaction is D-erythrose 4-phosphate + NAD(+) + H2O = 4-phospho-D-erythronate + NADH + 2 H(+). It participates in cofactor biosynthesis; pyridoxine 5'-phosphate biosynthesis; pyridoxine 5'-phosphate from D-erythrose 4-phosphate: step 1/5. Its function is as follows. Catalyzes the NAD-dependent conversion of D-erythrose 4-phosphate to 4-phosphoerythronate. This chain is D-erythrose-4-phosphate dehydrogenase, found in Aeromonas hydrophila subsp. hydrophila (strain ATCC 7966 / DSM 30187 / BCRC 13018 / CCUG 14551 / JCM 1027 / KCTC 2358 / NCIMB 9240 / NCTC 8049).